We begin with the raw amino-acid sequence, 191 residues long: MELEVFAGQEKSELSMIEVARAILEQRGRDNEMYFSDLVNDIQTYLGKSDSAIRESLPFFYSDLNTDGSFIPLGENKWGLRSWYAIDEIDEEIITLEEDEDGAPKRKKKRVNAFMDGDEDAIDYNDDDPEDEDFTEETPSLEYDEENPDDEKSEVESYDSEINEIIPDEDLDEDVEINEEDDEEEEEEEEV.

Residues 14–83 (LSMIEVARAI…GENKWGLRSW (70 aa)) enclose the HTH HARE-type domain. Acidic residues-rich tracts occupy residues 117 to 136 (GDEDAIDYNDDDPEDEDFTE) and 142 to 191 (EYDE…EEEV). Positions 117–191 (GDEDAIDYND…DEEEEEEEEV (75 aa)) are disordered.

It belongs to the RpoE family. As to quaternary structure, RNAP is composed of a core of 2 alpha, a beta and a beta' subunits. The core is associated with a delta subunit and one of several sigma factors.

Functionally, participates in both the initiation and recycling phases of transcription. In the presence of the delta subunit, RNAP displays an increased specificity of transcription, a decreased affinity for nucleic acids, and an increased efficiency of RNA synthesis because of enhanced recycling. The protein is Probable DNA-directed RNA polymerase subunit delta of Streptococcus agalactiae serotype Ia (strain ATCC 27591 / A909 / CDC SS700).